We begin with the raw amino-acid sequence, 423 residues long: Replication factor C large subunit (423 aa).

50–57 provides a ligand contact to ATP; that stretch reads GPAGCGKT.

Belongs to the activator 1 small subunits family. RfcL subfamily. As to quaternary structure, heteromultimer composed of small subunits (RfcS) and large subunits (RfcL).

In terms of biological role, part of the RFC clamp loader complex which loads the PCNA sliding clamp onto DNA. The chain is Replication factor C large subunit from Staphylothermus marinus (strain ATCC 43588 / DSM 3639 / JCM 9404 / F1).